The chain runs to 334 residues: Malate dehydrogenase (334 aa).

17 to 23 contacts NAD(+); the sequence is GAAGQIG. Substrate contacts are provided by arginine 98 and arginine 104. Residues asparagine 111, glutamine 118, and 135–137 each bind NAD(+); that span reads VGN. Substrate contacts are provided by asparagine 137 and arginine 168. Residue histidine 193 is the Proton acceptor of the active site.

It belongs to the LDH/MDH superfamily. MDH type 2 family.

It catalyses the reaction (S)-malate + NAD(+) = oxaloacetate + NADH + H(+). Functionally, catalyzes the reversible oxidation of malate to oxaloacetate. This is Malate dehydrogenase from Deinococcus geothermalis (strain DSM 11300 / CIP 105573 / AG-3a).